A 371-amino-acid chain; its full sequence is Histidinol-phosphate aminotransferase (371 aa).

The residue at position 228 (K228) is an N6-(pyridoxal phosphate)lysine.

Belongs to the class-II pyridoxal-phosphate-dependent aminotransferase family. Histidinol-phosphate aminotransferase subfamily. Pyridoxal 5'-phosphate is required as a cofactor.

It catalyses the reaction L-histidinol phosphate + 2-oxoglutarate = 3-(imidazol-4-yl)-2-oxopropyl phosphate + L-glutamate. The protein operates within amino-acid biosynthesis; L-histidine biosynthesis; L-histidine from 5-phospho-alpha-D-ribose 1-diphosphate: step 7/9. The sequence is that of Histidinol-phosphate aminotransferase from Methanococcus maripaludis (strain C6 / ATCC BAA-1332).